Here is a 391-residue protein sequence, read N- to C-terminus: MKFIDEALIRVEAGDGGNGCVSFRREKYIPKGGPDGGDGGDGGDVYLIADENLNTLIDYRFEKRYAAGRGENGRSAGCTGHRGNDITLRVPVGTRAIDNDTQEVIGDLTKHGMKMLVAKGGYHGLGNTRFKSSVNRAPRQKTNGTPGEKRDLLLELMLLADVGMLGLPNAGKSTFIRAVSAAKPKVADYPFTTLVPSLGVARVGADRSFVVADIPGLIEGAADGAGLGIRFLKHLERCRVLIHLVDIMPIDESDPAQNISVIESELYQYSEKLSEKPTWLVFNKIDTIGEEEAQARAQEIAEQIGWEGDYYLISAATGQNVQNLTRDIMDFIEANPREVAEENTEADEVKFKWDDYHQQAMQNPIEEDWDNFDDDWSEEDEEGVEFVYTRS.

An Obg domain is found at 1 to 159; it reads MKFIDEALIR…RDLLLELMLL (159 aa). Residues 160 to 333 enclose the OBG-type G domain; sequence ADVGMLGLPN…LTRDIMDFIE (174 aa). GTP contacts are provided by residues 166 to 173, 191 to 195, 213 to 216, 283 to 286, and 314 to 316; these read GLPNAGKS, FTTLV, DIPG, NKID, and SAA. Positions 173 and 193 each coordinate Mg(2+).

It belongs to the TRAFAC class OBG-HflX-like GTPase superfamily. OBG GTPase family. Monomer. Mg(2+) serves as cofactor.

It is found in the cytoplasm. An essential GTPase which binds GTP, GDP and possibly (p)ppGpp with moderate affinity, with high nucleotide exchange rates and a fairly low GTP hydrolysis rate. Plays a role in control of the cell cycle, stress response, ribosome biogenesis and in those bacteria that undergo differentiation, in morphogenesis control. This chain is GTPase Obg, found in Actinobacillus pleuropneumoniae serotype 5b (strain L20).